The sequence spans 889 residues: Oxysterol-binding protein-related protein 8 (889 aa).

Met1 bears the N-acetylmethionine mark. A disordered region spans residues 1-129; it reads MEAALADGEP…SLKVQKKNYR (129 aa). A phosphoserine mark is found at Ser14, Ser65, and Ser68. Over residues 62–71 the composition is skewed to polar residues; it reads PSLSPASLHS. Basic and acidic residues-rich tracts occupy residues 73–88, 95–109, and 116–129; these read GFER…KDDS, SKSE…EKDS, and TKKE…KNYR. A PH domain is found at 148 to 265; that stretch reads VIVMADWLKI…WMDALELALK (118 aa). Residues Ser314, Ser328, and Ser342 each carry the phosphoserine modification. The segment covering 321–336 has biased composition (basic and acidic residues); it reads FKDQDLYSDKSDKEND. Residues 321–374 form a disordered region; it reads FKDQDLYSDKSDKENDPEHDESDNEVLGKSEESDTDTSERQDDSYIDPEPVEPL. The span at 346–363 shows a compositional bias: basic and acidic residues; sequence VLGKSEESDTDTSERQDD. Residues 420 to 425, 482 to 485, and 514 to 515 each bind a 1,2-diacyl-sn-glycero-3-phospho-(1D-myo-inositol 4-phosphate); these read LSRVVL, KPYN, and HH. A 1,2-diacyl-sn-glycero-3-phospho-L-serine contacts are provided by residues 420–425 and Asn485; that span reads LSRVVL. Ser540 serves as a coordination point for a 1,2-diacyl-sn-glycero-3-phospho-L-serine. 3 residues coordinate a 1,2-diacyl-sn-glycero-3-phospho-(1D-myo-inositol 4-phosphate): Lys706, Glu710, and Arg714. The tract at residues 772–823 is disordered; the sequence is HRTPMVSVPKMKHKPTRQQKKVVKGYSSPEPDIQDSSGSEAQSVKPSTRRKK. Basic residues predominate over residues 781-794; that stretch reads KMKHKPTRQQKKVV. Residues 805 to 817 are compositionally biased toward polar residues; the sequence is QDSSGSEAQSVKP. Residues Ser807, Ser808, Ser810, and Ser814 each carry the phosphoserine modification. Residues 871 to 888 traverse the membrane as a helical segment; sequence YFVIFLLILLQVIINFIF.

The protein belongs to the OSBP family. As to quaternary structure, interacts with SPAG5. Interacts with NUP62. As to expression, widely expressed. Most abundant in liver, spleen, kidney, brain and adipose tissue.

The protein localises to the endoplasmic reticulum membrane. It is found in the nucleus membrane. Functionally, lipid transporter involved in lipid countertransport between the endoplasmic reticulum and the plasma membrane: specifically exchanges phosphatidylserine with phosphatidylinositol 4-phosphate (PI4P), delivering phosphatidylserine to the plasma membrane in exchange for PI4P, which is degraded by the SAC1/SACM1L phosphatase in the endoplasmic reticulum. Binds phosphatidylserine and PI4P in a mutually exclusive manner. Binds oxysterol, 25-hydroxycholesterol and cholesterol. In Mus musculus (Mouse), this protein is Oxysterol-binding protein-related protein 8.